The sequence spans 248 residues: Pulmonary surfactant-associated protein A (248 aa).

A signal peptide spans 1 to 20; the sequence is MSLGSLAFTLFLTVVAGIKC. Residue N21 is glycosylated (N-linked (GlcNAc...) asparagine). The Collagen-like domain occupies 28 to 100; that stretch reads GSPGIPGTPG…PGERGLPGFP (73 aa). The segment at 28–100 is disordered; the sequence is GSPGIPGTPG…PGERGLPGFP (73 aa). A 4-hydroxyproline mark is found at P30, P33, P36, P42, P54, P57, P63, P67, P70, and P76. Residues 42–51 are compositionally biased toward basic and acidic residues; it reads PGRDGRDGIK. Over residues 54-65 the composition is skewed to pro residues; it reads PGPPGPMGPPGG. The span at 69 to 82 shows a compositional bias: low complexity; the sequence is LPGRDGLPGAPGAP. Over residues 84–93 the composition is skewed to basic and acidic residues; it reads EHGDKGEPGE. Residues 132–248 form the C-type lectin domain; sequence LSVGDKVFST…LQYRLAICEF (117 aa). Cystine bridges form between C155-C246 and C224-C238. N207 is a glycosylation site (N-linked (GlcNAc...) asparagine). 4 residues coordinate Ca(2+): E215, R217, N234, and D235.

It belongs to the SFTPA family. Oligomeric complex of 6 set of homotrimers.

The protein resides in the secreted. It is found in the extracellular space. It localises to the extracellular matrix. Its subcellular location is the surface film. In terms of biological role, in presence of calcium ions, it binds to surfactant phospholipids and contributes to lower the surface tension at the air-liquid interface in the alveoli of the mammalian lung and is essential for normal respiration. Enhances the expression of MYO18A/SP-R210 on alveolar macrophages. This chain is Pulmonary surfactant-associated protein A (Sftpa1), found in Mus musculus (Mouse).